Reading from the N-terminus, the 129-residue chain is Thioredoxin H7 (129 aa).

Residues 6–129 (SSVHDVHSSM…LVKKIEQHRV (124 aa)) enclose the Thioredoxin domain. Active-site nucleophile residues include C55 and C58. C55 and C58 are disulfide-bonded.

The protein belongs to the thioredoxin family. Plant H-type subfamily.

Its subcellular location is the cytoplasm. Probable thiol-disulfide oxidoreductase that may be involved in the redox regulation of a number of cytosolic enzymes. In Arabidopsis thaliana (Mouse-ear cress), this protein is Thioredoxin H7 (TRX7).